We begin with the raw amino-acid sequence, 476 residues long: Probable secreted beta-glucosidase SIM1 (476 aa).

An N-terminal signal peptide occupies residues 1 to 19 (MKFSTAVTTLISSGAIVSA). The span at 111–203 (ATASTSQGAS…SSSSSSSGSG (93 aa)) shows a compositional bias: low complexity. Positions 111–214 (ATASTSQGAS…IYGDLADFSG (104 aa)) are disordered. Residue asparagine 423 is glycosylated (N-linked (GlcNAc...) asparagine).

It belongs to the SUN family.

The protein resides in the secreted. It is found in the cell wall. Involved in the remodeling of the cell wall during the various phases of yeast culture development and under various environmental conditions. Required for the maintenance of the CLB5 kinase activity. The chain is Probable secreted beta-glucosidase SIM1 (SIM1) from Saccharomyces cerevisiae (strain ATCC 204508 / S288c) (Baker's yeast).